The following is a 161-amino-acid chain: Chorion class B protein L12 (161 aa).

Positions 1–21 are cleaved as a signal peptide; sequence MAAKLILFVCATALVAQSVLS. The left arm stretch occupies residues 22–52; the sequence is IGCGCGGRGYGGLGYGGLGYGGLGGGCGRGF. 3 consecutive repeat copies span residues 30 to 34, 35 to 39, and 40 to 44. Residues 30 to 44 form a 3 X 5 AA tandem repeats of G-Y-G-G-L region; the sequence is GYGGLGYGGLGYGGL. Residues 53–121 form a central domain region; that stretch reads SGGGLPVATA…GNGAVGITRE (69 aa). Residues 122–161 are right arm (Gly-rich tandem repeats); the sequence is GGFGYGAGYGDGYGLGFGGYGGGYGLGNGGYGGCGCGWGY.

This sequence belongs to the chorion protein family.

Functionally, this protein is one of many from the eggshell of the silk moth. The chain is Chorion class B protein L12 from Bombyx mori (Silk moth).